A 195-amino-acid polypeptide reads, in one-letter code: Holliday junction branch migration complex subunit RuvA (195 aa).

The domain I stretch occupies residues 1 to 61 (MYEYFEGIIS…DTGITLYGFQ (61 aa)). The tract at residues 62 to 140 (DQDDKGLFLK…DYVARLDKPE (79 aa)) is domain II. Residues 141–146 (NGEEIS) form a flexible linker region. The interval 146–195 (SPALNDALLALIALGYTQKEVDRITPKLVEIEADTADQYIKKGLALLLKK) is domain III.

This sequence belongs to the RuvA family. As to quaternary structure, homotetramer. Forms an RuvA(8)-RuvB(12)-Holliday junction (HJ) complex. HJ DNA is sandwiched between 2 RuvA tetramers; dsDNA enters through RuvA and exits via RuvB. An RuvB hexamer assembles on each DNA strand where it exits the tetramer. Each RuvB hexamer is contacted by two RuvA subunits (via domain III) on 2 adjacent RuvB subunits; this complex drives branch migration. In the full resolvosome a probable DNA-RuvA(4)-RuvB(12)-RuvC(2) complex forms which resolves the HJ.

The protein localises to the cytoplasm. In terms of biological role, the RuvA-RuvB-RuvC complex processes Holliday junction (HJ) DNA during genetic recombination and DNA repair, while the RuvA-RuvB complex plays an important role in the rescue of blocked DNA replication forks via replication fork reversal (RFR). RuvA specifically binds to HJ cruciform DNA, conferring on it an open structure. The RuvB hexamer acts as an ATP-dependent pump, pulling dsDNA into and through the RuvAB complex. HJ branch migration allows RuvC to scan DNA until it finds its consensus sequence, where it cleaves and resolves the cruciform DNA. The sequence is that of Holliday junction branch migration complex subunit RuvA from Lactobacillus acidophilus (strain ATCC 700396 / NCK56 / N2 / NCFM).